A 540-amino-acid chain; its full sequence is Probable ATP-dependent RNA helicase DDX28 (540 aa).

The Mitochondrial targeting signal signature appears at 3 to 18 (LTRPVRLFSLVTRLLL). Positions 126–156 (GSFADLGLEPRVLHALQEAAPEVVQPTTVQS) match the Q motif motif. The Helicase ATP-binding domain occupies 159–351 (IPSLLRGRHV…NKVASPDAVT (193 aa)). 172–179 (AETGSGKT) contributes to the ATP binding site. The Nuclear export signal motif lies at 180 to 191 (LSYLLPLLQRLL). Positions 286–289 (DEAD) match the DEAD motif. Positions 377-536 (KVAELVHILK…GLASSVKEPL (160 aa)) constitute a Helicase C-terminal domain. The short motif at 520 to 523 (RRRR) is the Nuclear localization signal element.

It belongs to the DEAD box helicase family. In terms of assembly, monomer. Found in a complex with GRSF1, DHX30, FASTKD2 and FASTKD5. Associates with the 16S mitochondrial rRNA (16S mt-rRNA) and with the mitochondrial ribosome large subunit (39S). In terms of tissue distribution, expressed in all tissues tested, including brain, placenta, lung, liver, skeletal muscle, kidney, pancreas, leukocytes, colon, small intestine, ovary and prostate.

The protein localises to the nucleus. It localises to the mitochondrion. The protein resides in the mitochondrion matrix. It is found in the mitochondrion nucleoid. The catalysed reaction is ATP + H2O = ADP + phosphate + H(+). In terms of biological role, plays an essential role in facilitating the proper assembly of the mitochondrial large ribosomal subunit and its helicase activity is essential for this function. May be involved in RNA processing or transport. Has RNA and Mg(2+)-dependent ATPase activity. The protein is Probable ATP-dependent RNA helicase DDX28 (DDX28) of Homo sapiens (Human).